The sequence spans 159 residues: MASFCLSRCCALRGSTAVGWSLRTIGTSRVSLAGEGERPPPMIDLEDKSLPIPIYKEKHNEPLKLQKSRLLYQSRKRGMLENGLLLSTFAAKYLESLDARQTKLYDTLINMPTNDWDIFYWATGVKPTPQEYDNEIMNMLKEHVKNANKEKRLCQPALY.

Residues 1-14 constitute a mitochondrion transit peptide; it reads MASFCLSRCCALRG.

Belongs to the SDHAF2 family. In terms of assembly, interacts with the flavoprotein subunit within the SDH catalytic dimer.

It is found in the mitochondrion matrix. Plays an essential role in the assembly of succinate dehydrogenase (SDH), an enzyme complex (also referred to as respiratory complex II) that is a component of both the tricarboxylic acid (TCA) cycle and the mitochondrial electron transport chain, and which couples the oxidation of succinate to fumarate with the reduction of ubiquinone (coenzyme Q) to ubiquinol. Required for flavinylation (covalent attachment of FAD) of the flavoprotein subunit of the SDH catalytic dimer. This chain is Succinate dehydrogenase assembly factor 2, mitochondrial, found in Culex quinquefasciatus (Southern house mosquito).